The following is a 404-amino-acid chain: MCSSLCALLLVILAVHNVHAKSDPELHMTTPQIIERWGYPAMIYSVTTDDGYILELHRIPHGKTNVTWPNGKQPVVFMQHGLLCASTDWTMNLPEQSAAFIFADAGFDVWLGNMRGNTYSMKHKNLKASHSDFWEWSWDEMATYDLPAMIDKVLEVTGQESLYYMGHSQGTLTMFSHLSKDDGIFAKKIKKFFALAPVGSVKDIKGFLSFFAHYFSLEFDGWFDVFGAGEFLPNNWAMKLAAKDICGGLKIESDLCDNVCFLIAGPESDQWNSTRVPVYASHDPAGTATQNIVHWIQMVRHGGVPAYDWGSKENKKKYGQANPPEYDFTAIKGTQIYLYWSDADWLADKTDITNYLLTRLNPAIIAQNNYFTDYNHFDFVFGLRAPNDIYLPIVDICTKDYNGK.

An N-terminal signal peptide occupies residues 1–20 (MCSSLCALLLVILAVHNVHA). N-linked (GlcNAc...) asparagine glycosylation is present at Asn-65. The Nucleophile role is filled by Ser-168. The N-linked (GlcNAc...) asparagine glycan is linked to Asn-272. Catalysis depends on charge relay system residues Asp-344 and His-376.

This sequence belongs to the AB hydrolase superfamily. Lipase family.

It is found in the secreted. The protein resides in the lysosome lumen. Functionally, lipase that, together with lipl-1, plays a role in the response to nutrient deprivation by controlling lipid metabolism. Specifically, involved in the breakdown of lipids during lipophagy, a process during which lipids contained in lipid droplets that have been delivered to lysosomes by autophagy are degraded. In Caenorhabditis elegans, this protein is Lipase lipl-3.